The chain runs to 1849 residues: SH3 and multiple ankyrin repeat domains protein 2 (1849 aa).

A disordered region spans residues 1-33 (MPRSPTSSEDEMAQSFSDYSVGSESDSSKEETI). Residues 15–25 (SFSDYSVGSES) show a composition bias toward low complexity. ANK repeat units lie at residues 196–226 (TGET…HLDF), 230–259 (DGMT…SPDY), 263–293 (YGLT…TVCC), 297–326 (NGWH…DMSA), 330–359 (SGNT…NKEL), and 363–393 (NSQT…DIVP). Residues 451 to 493 (QQMPSKPEGAAKTIGSYVPGPRSRSPSLNRLGGAGEDGKRPQP) form a disordered region. Residues 526 to 585 (VPGRLFVAVKPYQPQVDGEIPLHRGDRVKVLSIGEGGFWEGSARGHIGWFPAECVEEVQC) form the SH3 domain. Residues 626–720 (TVVLQKKDNE…HLVLKVVTVT (95 aa)) enclose the PDZ domain. The span at 764–774 (SVRKKKDKPEE) shows a compositional bias: basic and acidic residues. The disordered stretch occupies residues 764 to 808 (SVRKKKDKPEEIVPASKPSRAAENMAVEPRVATIKQRPSSRCFPA). At Ser-831 the chain carries Phosphoserine. At Thr-860 the chain carries Phosphothreonine. The tract at residues 878-910 (LSMPDTSEDIPPPPQSVPPSPPPPSPTTYNCPK) is disordered. The segment covering 887 to 903 (IPPPPQSVPPSPPPPSP) has biased composition (pro residues). The residue at position 960 (Ser-960) is a Phosphoserine. Disordered regions lie at residues 1013-1293 (LVKQ…RKGD), 1328-1371 (LQEE…TTVP), 1432-1526 (PALS…GGEN), and 1574-1594 (SFVI…PGMA). Low complexity predominate over residues 1040–1052 (STSSSGKSSQGSS). Basic and acidic residues predominate over residues 1086 to 1097 (VRDREKRLEARR). Residue Ser-1099 is modified to Phosphoserine. Residues 1128–1138 (EEGDFADEDSA) show a composition bias toward acidic residues. Low complexity-rich tracts occupy residues 1159 to 1170 (GGAEASAPGEAG), 1181 to 1199 (GPES…AGPG), and 1208 to 1221 (RLLD…LALS). The segment covering 1274–1293 (RRQETENKYETDLGRDRKGD) has biased composition (basic and acidic residues). A Phosphothreonine modification is found at Thr-1278. Residues 1327–1333 (ALQEEDE) carry the SH3-binding motif. Low complexity predominate over residues 1343–1357 (SSPSEVPEGVSETEG). Positions 1445–1460 (TPQSPSLNSSQPTNSA) are enriched in polar residues. Over residues 1494-1505 (VDSRSSSDHHLE) the composition is skewed to basic and acidic residues. Residues 1506 to 1522 (TTSTISTVSSISTLSSE) are compositionally biased toward low complexity. Residues 1577–1588 (IPPPAPPPPPGS) show a composition bias toward pro residues. The O-linked (GlcNAc) threonine glycan is linked to Thr-1667. A compositionally biased stretch (polar residues) spans 1678–1692 (FTVRPGTSQPITLQS). The interval 1678–1776 (FTVRPGTSQP…SILQQPISNK (99 aa)) is disordered. A phosphoserine mark is found at Ser-1709 and Ser-1713. 2 stretches are compositionally biased toward low complexity: residues 1721-1738 (TLPA…PALS) and 1760-1774 (RSRS…QPIS). Residues 1786–1849 (WTKPDVADWL…ERALKQLLDR (64 aa)) form the SAM domain.

The protein belongs to the SHANK family. Is part of a complex with DLG4/PSD-95 and DLGAP1/GKAP. Interacts with CTTN/cortactin SH3 domain, DLGAP1/GKAP and alpha-latrotoxin receptor 1. Interacts with DNM2, DBNL, GRID2, BAIAP2, SLC9A3, PLCB3 and CFTR. Interacts (via proline-rich region) with PDE4D. Interacts with ABI1 (via SH3 domain). In terms of tissue distribution, isoform 3 is present in epithelial colonic cells (at protein level).

The protein resides in the apical cell membrane. It localises to the cytoplasm. Its subcellular location is the synapse. The protein localises to the postsynaptic density. It is found in the cell projection. The protein resides in the growth cone. It localises to the dendritic spine. Its function is as follows. Seems to be an adapter protein in the postsynaptic density (PSD) of excitatory synapses that interconnects receptors of the postsynaptic membrane including NMDA-type and metabotropic glutamate receptors, and the actin-based cytoskeleton. May play a role in the structural and functional organization of the dendritic spine and synaptic junction. This Homo sapiens (Human) protein is SH3 and multiple ankyrin repeat domains protein 2 (SHANK2).